The primary structure comprises 182 residues: Prorelaxin (182 aa).

A signal peptide spans 1 to 25 (MRRLFLSHVLGAWLLLSQLPRELSG). Pyrrolidone carboxylic acid is present on glutamine 26. 3 cysteine pairs are disulfide-bonded: cysteine 35–cysteine 169, cysteine 47–cysteine 182, and cysteine 168–cysteine 173. A propeptide spans 54-156 (KTVLRLEEPG…LKNLGLDKHS (103 aa)) (connecting peptide). Residues 161–162 (MI) constitute a propeptide that is removed on maturation. Glutamine 163 carries the post-translational modification Pyrrolidone carboxylic acid.

Belongs to the insulin family. As to quaternary structure, heterodimer of a B chain and an A chain linked by two disulfide bonds.

The protein resides in the secreted. Functionally, relaxin is an ovarian hormone that acts with estrogen to produce dilatation of the birth canal in many mammals. The polypeptide is Prorelaxin (RLN) (Equus caballus (Horse)).